Consider the following 1313-residue polypeptide: Inactive protein tyrosine kinase pTKL (1313 aa).

2 MORN repeats span residues Y20–N42 and F45–N63. N-linked (GlcNAc...) asparagine glycosylation is found at N63, N131, N178, N208, N254, N260, and N288. An SAM domain is found at W300–T365. N466, N516, N525, N528, and N534 each carry an N-linked (GlcNAc...) asparagine glycan. The segment covering E569–N580 has biased composition (basic and acidic residues). Residues E569–E631 form a disordered region. The segment covering P586 to K604 has biased composition (polar residues). N592, N598, N661, N678, N729, N735, and N749 each carry an N-linked (GlcNAc...) asparagine glycan. Residue K782 coordinates ATP. 5 N-linked (GlcNAc...) asparagine glycosylation sites follow: N790, N868, N940, N983, and N1000. The Protein kinase domain occupies F962–M1294. The short motif at K1052–F1055 is the RVxF motif element. Residues N1191 and N1198 are each glycosylated (N-linked (GlcNAc...) asparagine).

This sequence belongs to the protein kinase superfamily. TKL Ser/Thr protein kinase family.

It localises to the parasitophorous vacuole. It is found in the host cell membrane. Its subcellular location is the host cytoplasm. The protein resides in the host cytoskeleton. This Plasmodium berghei (strain Anka) protein is Inactive protein tyrosine kinase pTKL.